We begin with the raw amino-acid sequence, 250 residues long: 2,3-bisphosphoglycerate-dependent phosphoglycerate mutase (250 aa).

Residues 10 to 17 (RHGESQWN), 23 to 24 (TG), R62, 89 to 92 (ERHY), K100, 116 to 117 (RR), and 185 to 186 (GN) contribute to the substrate site. The Tele-phosphohistidine intermediate role is filled by H11. E89 acts as the Proton donor/acceptor in catalysis.

The protein belongs to the phosphoglycerate mutase family. BPG-dependent PGAM subfamily. In terms of assembly, homodimer.

The enzyme catalyses (2R)-2-phosphoglycerate = (2R)-3-phosphoglycerate. Its pathway is carbohydrate degradation; glycolysis; pyruvate from D-glyceraldehyde 3-phosphate: step 3/5. Its function is as follows. Catalyzes the interconversion of 2-phosphoglycerate and 3-phosphoglycerate. This is 2,3-bisphosphoglycerate-dependent phosphoglycerate mutase from Erwinia tasmaniensis (strain DSM 17950 / CFBP 7177 / CIP 109463 / NCPPB 4357 / Et1/99).